The following is a 64-amino-acid chain: Cytochrome c oxidase subunit 5C-2 (64 aa).

The helical transmembrane segment at S15 to W34 threads the bilayer.

The protein belongs to the cytochrome c oxidase subunit 5C family.

It localises to the mitochondrion inner membrane. In terms of biological role, this protein is one of the nuclear-coded polypeptide chains of cytochrome c oxidase, the terminal oxidase in mitochondrial electron transport. The polypeptide is Cytochrome c oxidase subunit 5C-2 (Arabidopsis thaliana (Mouse-ear cress)).